Reading from the N-terminus, the 200-residue chain is 3-isopropylmalate dehydratase small subunit (200 aa).

The protein belongs to the LeuD family. LeuD type 1 subfamily. In terms of assembly, heterodimer of LeuC and LeuD.

It catalyses the reaction (2R,3S)-3-isopropylmalate = (2S)-2-isopropylmalate. It functions in the pathway amino-acid biosynthesis; L-leucine biosynthesis; L-leucine from 3-methyl-2-oxobutanoate: step 2/4. Catalyzes the isomerization between 2-isopropylmalate and 3-isopropylmalate, via the formation of 2-isopropylmaleate. The polypeptide is 3-isopropylmalate dehydratase small subunit (Arthrobacter sp. (strain FB24)).